Consider the following 338-residue polypeptide: MKRMIALDGAQGEGGGQILRSALSLSMITGQPFTITSIRAGRAKPGLLRQHLTAVKAAAEICRATVEGAELGSQRLVFRPGAVRGGEYRFAIGSAGSCTLVLQTVLPALWFADGPSRVEVSGGTDNPSAPPADFIRRVLEPLLAKIGIHQQTTLLRHGFYPAGGGVVATEVSPVASFNTLQLGERGNIVQMRGEVLLAGVPRHVAEREIATLAGSFSLHEQNIHNLPRDQGPGNTVSLEVESENITERFFVVGEKRVSAEVVAAQLVKEVKRYLASPAAVGEYLADQLVLPMALAGAGEFTVAHPSCHLLTNIAVVERFLPVRFGLIEIDGVTRVSIE.

ATP is bound by residues Gln-103 and 283 to 287 (YLADQ). His-308 acts as the Tele-AMP-histidine intermediate in catalysis.

Belongs to the RNA 3'-terminal cyclase family. Type 1 subfamily.

It localises to the cytoplasm. The enzyme catalyses a 3'-end 3'-phospho-ribonucleotide-RNA + ATP = a 3'-end 2',3'-cyclophospho-ribonucleotide-RNA + AMP + diphosphate. Catalyzes the conversion of 3'-phosphate to a 2',3'-cyclic phosphodiester at the end of RNA. The mechanism of action of the enzyme occurs in 3 steps: (A) adenylation of the enzyme by ATP; (B) transfer of adenylate to an RNA-N3'P to produce RNA-N3'PP5'A; (C) and attack of the adjacent 2'-hydroxyl on the 3'-phosphorus in the diester linkage to produce the cyclic end product. The biological role of this enzyme is unknown but it is likely to function in some aspects of cellular RNA processing. The chain is RNA 3'-terminal phosphate cyclase from Shigella boydii serotype 4 (strain Sb227).